Reading from the N-terminus, the 204-residue chain is Uridylate kinase (204 aa).

26 to 31 contacts ATP; it reads GAGKGT. Positions 46–76 are NMP; the sequence is SAGDLLRAEQGRAGSQYGELIKNCIKEGQIV. A ribonucleoside 5'-phosphate-binding positions include Arg-52, 74–76, 104–107, and Gln-111; these read QIV and GFPR. The segment at 141-151 is LID; the sequence is ERGKTSGRSDD. Arg-142 contacts ATP. Residues Arg-148 and Arg-159 each contribute to the a ribonucleoside 5'-phosphate site. Arg-187 contacts ATP.

It belongs to the adenylate kinase family. UMP-CMP kinase subfamily. Monomer. Requires Mg(2+) as cofactor.

The protein localises to the cytoplasm. The protein resides in the nucleus. It catalyses the reaction UMP + ATP = UDP + ADP. Catalyzes the phosphorylation of pyrimidine nucleoside monophosphates at the expense of ATP. Plays an important role in de novo pyrimidine nucleotide biosynthesis. Has preference for UMP and dUMP as phosphate acceptors, but can also use CMP, dCMP, AMP, GMP, dGMP and dTMP. ATP and dATP are the best phosphate donors, but can also use GTP, dGTP, dCTP, and dTTP to some degree. The protein is Uridylate kinase of Saccharomyces cerevisiae (strain ATCC 204508 / S288c) (Baker's yeast).